Consider the following 345-residue polypeptide: MGLLILGIESSCDETGVALVRSIGAARPRLLAHALHSQVQMHQAYGGVVPELASRDHIRRVLPLTTQVLRASGQRLADVDVLAYTRGPGLAGALLVGAGLACALAAALGKPVLGVHHLEGHLLSPFLSADPPEFPFVALLVSGGHTQLMRVDGVGRYALLGETIDDAAGEAFDKSAKLMGLGYPGGPALARLAEQGSATAFGLPRPLLHSGDLDFSFAGLKTAVLTQVRKLGDQLPARKADLAASTEAAIVQVLVKKTLAALRQTGLRRIVVAGGVGANRRLRQQLDAACADSGLRVHYPELALCTDNGAMIALAAAMRLQAGVQQAGTDYAFDVLPRWPLAASA.

Residues histidine 117 and histidine 121 each contribute to the Fe cation site. Substrate is bound by residues 140 to 144 (LVSGG), aspartate 173, glycine 186, and asparagine 279. Residue aspartate 307 participates in Fe cation binding.

It belongs to the KAE1 / TsaD family. Fe(2+) serves as cofactor.

Its subcellular location is the cytoplasm. It carries out the reaction L-threonylcarbamoyladenylate + adenosine(37) in tRNA = N(6)-L-threonylcarbamoyladenosine(37) in tRNA + AMP + H(+). Its function is as follows. Required for the formation of a threonylcarbamoyl group on adenosine at position 37 (t(6)A37) in tRNAs that read codons beginning with adenine. Is involved in the transfer of the threonylcarbamoyl moiety of threonylcarbamoyl-AMP (TC-AMP) to the N6 group of A37, together with TsaE and TsaB. TsaD likely plays a direct catalytic role in this reaction. In Verminephrobacter eiseniae (strain EF01-2), this protein is tRNA N6-adenosine threonylcarbamoyltransferase.